The primary structure comprises 459 residues: MAP kinase-interacting serine/threonine-protein kinase 2 (459 aa).

The tract at residues 28–67 is disordered; that stretch reads LDPAQHGDSDFSPQCEARPDMPSSQPIDIPDAKKRGRKKK. Residues 60–66 carry the Nuclear localization signal motif; sequence KKRGRKK. A Phosphoserine modification is found at Ser74. One can recognise a Protein kinase domain in the interval 84–368; it reads QLQEDVLGEG…AAQVLQHPWV (285 aa). ATP-binding positions include 90–98 and Lys113; that span reads LGEGAHARV. 160 to 162 is a staurosporine binding site; sequence EKM. Asp205 functions as the Proton acceptor in the catalytic mechanism. Glu209 contributes to the staurosporine binding site. 2 positions are modified to phosphothreonine: Thr244 and Thr249. The Zn(2+) site is built by Cys299, Cys311, and Cys314. Thr379 carries the phosphothreonine modification. 2 positions are modified to phosphoserine: Ser431 and Ser434. Positions 438-442 match the MAP kinase binding motif; it reads LAQRR. The residue at position 446 (Ser446) is a Phosphoserine. Thr450 is subject to Phosphothreonine.

Belongs to the protein kinase superfamily. CAMK Ser/Thr protein kinase family. In terms of assembly, monomer. Interacts with the C-terminal regions of EIF4G1 and EIF4G2; this interaction is promoted when MAPK pathways are repressed but repressed upon ERK proteins activation. Also binds to dephosphorylated MAPK3/ERK1 and MAPK1/ER2K. Interaction with phosphorylated MAPK3/ERK1 and MAPK1/ER2K protects it from dephosphorylation and inactivation. Interacts with ESR2 and EIF4E in the nucleus. Requires Mg(2+) as cofactor. The cofactor is Zn(2+). Dual phosphorylation of Thr-244 and Thr-249 activates the kinase. Phosphorylation of Thr-379 activates the kinase. Phosphorylated upon arsenic trioxide As(2)O(3) treatment. Phosphorylated by MAPK1/ERK2, MAPK11 and MAPK14. Dephosphorylated by PP2A.

It is found in the cytoplasm. The protein resides in the nucleus. The protein localises to the PML body. It carries out the reaction L-seryl-[protein] + ATP = O-phospho-L-seryl-[protein] + ADP + H(+). The enzyme catalyses L-threonyl-[protein] + ATP = O-phospho-L-threonyl-[protein] + ADP + H(+). Its activity is regulated as follows. Inhibited by CGP57380 and staurosporine. Serine/threonine-protein kinase that phosphorylates SFPQ/PSF, HNRNPA1 and EIF4E. May play a role in the response to environmental stress and cytokines. Appears to regulate translation by phosphorylating EIF4E, thus increasing the affinity of this protein for the 7-methylguanosine-containing mRNA cap. Required for mediating PP2A-inhibition-induced EIF4E phosphorylation. Triggers EIF4E shuttling from cytoplasm to nucleus. Enhances the formation of EIF4F complex in pachytene spermatocytes, thus promoting mRNA translation during spermatogenesis. Displays a high basal kinase activity. Acts as a mediator of the suppressive effects of IFNgamma on hematopoiesis. Negative regulator for signals that control generation of arsenic trioxide As(2)O(3)-dependent apoptosis and anti-leukemic responses. Involved in anti-apoptotic signaling in response to serum withdrawal. The polypeptide is MAP kinase-interacting serine/threonine-protein kinase 2 (Mknk2) (Rattus norvegicus (Rat)).